We begin with the raw amino-acid sequence, 436 residues long: Acetyl-CoA decarbonylase/synthase complex subunit delta 1 (436 aa).

It belongs to the CdhD family. Heterodimer of delta and gamma chains. The ACDS complex is made up of alpha, epsilon, beta, gamma and delta chains with a probable stoichiometry of (alpha(2)epsilon(2))(4)-beta(8)-(gamma(1)delta(1))(8) (Potential).

It functions in the pathway one-carbon metabolism; methanogenesis from acetate. Part of a complex that catalyzes the reversible cleavage of acetyl-CoA, allowing growth on acetate as sole source of carbon and energy. Probably maintains the overall quaternary structure of the ACDS complex. This Methanosarcina thermophila protein is Acetyl-CoA decarbonylase/synthase complex subunit delta 1 (cdhD1).